The following is a 366-amino-acid chain: Ferrochelatase (366 aa).

The Fe cation site is built by His210 and Glu293.

This sequence belongs to the ferrochelatase family.

The protein localises to the cytoplasm. It carries out the reaction heme b + 2 H(+) = protoporphyrin IX + Fe(2+). The protein operates within porphyrin-containing compound metabolism; protoheme biosynthesis; protoheme from protoporphyrin-IX: step 1/1. Catalyzes the ferrous insertion into protoporphyrin IX. In Leptospira borgpetersenii serovar Hardjo-bovis (strain JB197), this protein is Ferrochelatase.